A 573-amino-acid polypeptide reads, in one-letter code: MRTENTATLNLMWGALILEELARLGVQHVCMAPGSRSTPLTLAAAKQTKLKRHLHFDERGLGFMALGLAKASSAPVAIITTSGTAVANLYPAIVEAWLTHVPLIVLSGDRPPELLGCGANQAIVQPAIFANYAQQVNLPTPDAHIAPQMLLTTLDEAVANQTRPVHINCMYREPLYPSELTATILDSESPYLKPLQTWLQQARPYTIYGKREQLSHPSEDAIMRFVHGKGVIIAGTLTPEQDPQQLIALSQKIGWPLLTDAQSQLRQHPAAIGNIDQLLQHPKARNLLQEADRVLVFGGRLLSKRLIAYLAEQNWHSYWQVLPQQDRLDPSHNAKHIWHANAAQFAQLNWYRSSSANWANTLITYNDDLHHLFVRNIDQGEFGEAQVIRAIANTRPLEQQLFIGNSLPVRLYDMYAPVSCCTATTYTNRGASGIDGLLATACGIAAHQGKPTSLIIGDLSQLHDLNSFAIARSLTSPLVIIILNNDGGNIFNLLPVPNEELRSDYYRLSHGLEFGYAAAMFNLPYNQVDNLADFQTCYNEALDFQGASVIEVTVSQHQASEQIAALNLWVKQS.

Belongs to the TPP enzyme family. MenD subfamily. In terms of assembly, homodimer. Requires Mg(2+) as cofactor. Mn(2+) serves as cofactor. The cofactor is thiamine diphosphate.

It catalyses the reaction isochorismate + 2-oxoglutarate + H(+) = 5-enolpyruvoyl-6-hydroxy-2-succinyl-cyclohex-3-ene-1-carboxylate + CO2. Its pathway is quinol/quinone metabolism; 1,4-dihydroxy-2-naphthoate biosynthesis; 1,4-dihydroxy-2-naphthoate from chorismate: step 2/7. It participates in quinol/quinone metabolism; menaquinone biosynthesis. In terms of biological role, catalyzes the thiamine diphosphate-dependent decarboxylation of 2-oxoglutarate and the subsequent addition of the resulting succinic semialdehyde-thiamine pyrophosphate anion to isochorismate to yield 2-succinyl-5-enolpyruvyl-6-hydroxy-3-cyclohexene-1-carboxylate (SEPHCHC). In Shewanella oneidensis (strain ATCC 700550 / JCM 31522 / CIP 106686 / LMG 19005 / NCIMB 14063 / MR-1), this protein is 2-succinyl-5-enolpyruvyl-6-hydroxy-3-cyclohexene-1-carboxylate synthase.